The primary structure comprises 519 residues: Lysine histidine transporter-like 8 (519 aa).

The segment at 1–44 (MDERPETELISIPATPRVSTPEILTPSGQRSPRPATKPSSATWT) is disordered. The Cytoplasmic segment spans residues 1-114 (MDERPETELI…NLNAGVGFQA (114 aa)). 2 consecutive transmembrane segments (helical) span residues 115–135 (LVLP…SLTI) and 136–156 (AYCW…AVPG). The Cytoplasmic portion of the chain corresponds to 157–176 (KRYNRYVELAQAAFGERLGV). A helical transmembrane segment spans residues 177–197 (WLALFPTVYLSAGTATALILI). Residues 198–217 (GGETMKLFFQIVCGPLCTSN) are Extracellular-facing. Residues 218–238 (PLTTVEWYLVFTSLCIVLSQL) traverse the membrane as a helical segment. The Cytoplasmic portion of the chain corresponds to 239 to 243 (PNLNS). The helical transmembrane segment at 244 to 264 (IAGLSLIGAVTAITYSTMVWV) threads the bilayer. Topologically, residues 265–282 (LSVSQPRPATISYEPLSM) are extracellular. The chain crosses the membrane as a helical span at residues 283 to 303 (PSTSGSLFAVLNALGIIAFAF). Residues 304-333 (RGHNLVLEIQSTMPSTFKHPAHVPMWRGAK) lie on the Cytoplasmic side of the membrane. Residues 334–354 (ISYFLIALCIFPISIGGFWAY) traverse the membrane as a helical segment. Topologically, residues 355-377 (GNLMPSGGMLAALYAFHIHDIPR) are extracellular. The helical transmembrane segment at 378 to 398 (GLLATAFLLVVFSCLSSFQIY) threads the bilayer. Residues 399 to 427 (SMPAFDSFEAGYTSRTNKPCSIWVRSGFR) lie on the Cytoplasmic side of the membrane. The chain crosses the membrane as a helical span at residues 428–448 (VFFGFVSFFIGVALPFLSSLA). Gly449 is a topological domain (extracellular). Residues 450–470 (LLGGLTLPVTFAYPCFMWVLI) traverse the membrane as a helical segment. Residues 471 to 485 (KKPAKYSFNWYFHWG) lie on the Cytoplasmic side of the membrane. The helical transmembrane segment at 486 to 506 (LGWLGVAFSLAFSIGGIWSMV) threads the bilayer. Residues 507-519 (TNGLKLKFFKPPN) are Extracellular-facing.

This sequence belongs to the amino acid/polyamine transporter 2 family. Amino acid/auxin permease (AAAP) (TC 2.A.18.2) subfamily.

The protein resides in the cell membrane. In terms of biological role, amino acid transporter. This Arabidopsis thaliana (Mouse-ear cress) protein is Lysine histidine transporter-like 8 (AATL1).